Reading from the N-terminus, the 592-residue chain is A-type ATP synthase subunit A (592 aa).

Residue 234–241 coordinates ATP; that stretch reads GGFGTGKT.

The protein belongs to the ATPase alpha/beta chains family. In terms of assembly, has multiple subunits with at least A(3), B(3), C, D, E, F, H, I and proteolipid K(x).

It localises to the cell membrane. It catalyses the reaction ATP + H2O + 4 H(+)(in) = ADP + phosphate + 5 H(+)(out). Its function is as follows. Component of the A-type ATP synthase that produces ATP from ADP in the presence of a proton gradient across the membrane. The A chain is the catalytic subunit. This Cenarchaeum symbiosum (strain A) protein is A-type ATP synthase subunit A.